Here is a 251-residue protein sequence, read N- to C-terminus: 1-(5-phosphoribosyl)-5-[(5-phosphoribosylamino)methylideneamino] imidazole-4-carboxamide isomerase (251 aa).

Residue Asp8 is the Proton acceptor of the active site. Asp131 functions as the Proton donor in the catalytic mechanism.

Belongs to the HisA/HisF family.

Its subcellular location is the cytoplasm. The enzyme catalyses 1-(5-phospho-beta-D-ribosyl)-5-[(5-phospho-beta-D-ribosylamino)methylideneamino]imidazole-4-carboxamide = 5-[(5-phospho-1-deoxy-D-ribulos-1-ylimino)methylamino]-1-(5-phospho-beta-D-ribosyl)imidazole-4-carboxamide. It participates in amino-acid biosynthesis; L-histidine biosynthesis; L-histidine from 5-phospho-alpha-D-ribose 1-diphosphate: step 4/9. This is 1-(5-phosphoribosyl)-5-[(5-phosphoribosylamino)methylideneamino] imidazole-4-carboxamide isomerase from Thiobacillus denitrificans (strain ATCC 25259 / T1).